The following is a 338-amino-acid chain: Holliday junction branch migration complex subunit RuvB (338 aa).

A large ATPase domain (RuvB-L) region spans residues Ala-4–Tyr-187. ATP-binding positions include Arg-27, Gly-68, Lys-71, Thr-72, Thr-73, Glu-134–Tyr-136, Arg-177, Tyr-187, and Arg-224. Thr-72 provides a ligand contact to Mg(2+). The small ATPAse domain (RuvB-S) stretch occupies residues Asn-188–Asp-258. A head domain (RuvB-H) region spans residues Ser-261–Lys-338. Residues Arg-297, Arg-316, and Arg-321 each contribute to the DNA site.

This sequence belongs to the RuvB family. Homohexamer. Forms an RuvA(8)-RuvB(12)-Holliday junction (HJ) complex. HJ DNA is sandwiched between 2 RuvA tetramers; dsDNA enters through RuvA and exits via RuvB. An RuvB hexamer assembles on each DNA strand where it exits the tetramer. Each RuvB hexamer is contacted by two RuvA subunits (via domain III) on 2 adjacent RuvB subunits; this complex drives branch migration. In the full resolvosome a probable DNA-RuvA(4)-RuvB(12)-RuvC(2) complex forms which resolves the HJ.

The protein localises to the cytoplasm. It catalyses the reaction ATP + H2O = ADP + phosphate + H(+). Functionally, the RuvA-RuvB-RuvC complex processes Holliday junction (HJ) DNA during genetic recombination and DNA repair, while the RuvA-RuvB complex plays an important role in the rescue of blocked DNA replication forks via replication fork reversal (RFR). RuvA specifically binds to HJ cruciform DNA, conferring on it an open structure. The RuvB hexamer acts as an ATP-dependent pump, pulling dsDNA into and through the RuvAB complex. RuvB forms 2 homohexamers on either side of HJ DNA bound by 1 or 2 RuvA tetramers; 4 subunits per hexamer contact DNA at a time. Coordinated motions by a converter formed by DNA-disengaged RuvB subunits stimulates ATP hydrolysis and nucleotide exchange. Immobilization of the converter enables RuvB to convert the ATP-contained energy into a lever motion, pulling 2 nucleotides of DNA out of the RuvA tetramer per ATP hydrolyzed, thus driving DNA branch migration. The RuvB motors rotate together with the DNA substrate, which together with the progressing nucleotide cycle form the mechanistic basis for DNA recombination by continuous HJ branch migration. Branch migration allows RuvC to scan DNA until it finds its consensus sequence, where it cleaves and resolves cruciform DNA. The chain is Holliday junction branch migration complex subunit RuvB from Shewanella woodyi (strain ATCC 51908 / MS32).